We begin with the raw amino-acid sequence, 261 residues long: Shikimate dehydrogenase (NADP(+)) (261 aa).

Shikimate is bound by residues 13 to 15 (SLS) and Thr60. Lys64 acts as the Proton acceptor in catalysis. Position 76 (Glu76) interacts with NADP(+). Shikimate-binding residues include Asn85 and Asp100. Residues 122 to 126 (GAGGA), 143 to 148 (NRTVER), and Ile203 contribute to the NADP(+) site. Shikimate is bound at residue Tyr205. Gly226 is a binding site for NADP(+).

It belongs to the shikimate dehydrogenase family. As to quaternary structure, homodimer.

The enzyme catalyses shikimate + NADP(+) = 3-dehydroshikimate + NADPH + H(+). The protein operates within metabolic intermediate biosynthesis; chorismate biosynthesis; chorismate from D-erythrose 4-phosphate and phosphoenolpyruvate: step 4/7. Involved in the biosynthesis of the chorismate, which leads to the biosynthesis of aromatic amino acids. Catalyzes the reversible NADPH linked reduction of 3-dehydroshikimate (DHSA) to yield shikimate (SA). This chain is Shikimate dehydrogenase (NADP(+)), found in Exiguobacterium sp. (strain ATCC BAA-1283 / AT1b).